The primary structure comprises 125 residues: Large ribosomal subunit protein uL22 (125 aa).

It belongs to the universal ribosomal protein uL22 family. In terms of assembly, part of the 50S ribosomal subunit.

Functionally, this protein binds specifically to 23S rRNA; its binding is stimulated by other ribosomal proteins, e.g. L4, L17, and L20. It is important during the early stages of 50S assembly. It makes multiple contacts with different domains of the 23S rRNA in the assembled 50S subunit and ribosome. The globular domain of the protein is located near the polypeptide exit tunnel on the outside of the subunit, while an extended beta-hairpin is found that lines the wall of the exit tunnel in the center of the 70S ribosome. This Acetivibrio thermocellus (strain ATCC 27405 / DSM 1237 / JCM 9322 / NBRC 103400 / NCIMB 10682 / NRRL B-4536 / VPI 7372) (Clostridium thermocellum) protein is Large ribosomal subunit protein uL22.